A 345-amino-acid chain; its full sequence is Linoleate 10R-lipoxygenase COP4 (345 aa).

Mg(2+)-binding residues include Asp87, Asp91, Asn222, Ser226, and Glu230. Residues 87-91 carry the DDXXD motif motif; that stretch reads DEISD.

This sequence belongs to the terpene synthase family. Mg(2+) is required as a cofactor.

It carries out the reaction (2E,6E)-farnesyl diphosphate + H2O = cubebol + diphosphate. The enzyme catalyses (2E,6E)-farnesyl diphosphate = beta-copaene + diphosphate. It catalyses the reaction (2E,6E)-farnesyl diphosphate = beta-cubebene + diphosphate. The catalysed reaction is (2E,6E)-farnesyl diphosphate = (+)-sativene + diphosphate. In terms of biological role, sesquiterpene synthase that catalyzes the cyclization of farnesyl diphosphate (FPP) into multiple products, including germacrene D, beta-copaene, beta-cubebene, (+)-sativene and cubebol, a natural sesquiterpene alcohol used in the food industry for its cooling and refreshing taste. Terpenoid hydrocarbons resulting from cyclization of farnesyl diphosphate are intermediates in the biosynthesis of biologically active compounds such as antibiotics, toxins and pheromones. The polypeptide is Linoleate 10R-lipoxygenase COP4 (COP4) (Coprinopsis cinerea (strain Okayama-7 / 130 / ATCC MYA-4618 / FGSC 9003) (Inky cap fungus)).